Consider the following 499-residue polypeptide: Protein nucleotidyltransferase YdiU (499 aa).

Gly-95, Gly-97, Arg-98, Lys-117, Asp-129, Gly-130, Arg-180, and Arg-187 together coordinate ATP. Asp-256 (proton acceptor) is an active-site residue. Mg(2+) is bound by residues Asn-257 and Asp-266. Asp-266 contributes to the ATP binding site.

This sequence belongs to the SELO family. Mg(2+) is required as a cofactor. Requires Mn(2+) as cofactor.

It carries out the reaction L-seryl-[protein] + ATP = 3-O-(5'-adenylyl)-L-seryl-[protein] + diphosphate. It catalyses the reaction L-threonyl-[protein] + ATP = 3-O-(5'-adenylyl)-L-threonyl-[protein] + diphosphate. The enzyme catalyses L-tyrosyl-[protein] + ATP = O-(5'-adenylyl)-L-tyrosyl-[protein] + diphosphate. The catalysed reaction is L-histidyl-[protein] + UTP = N(tele)-(5'-uridylyl)-L-histidyl-[protein] + diphosphate. It carries out the reaction L-seryl-[protein] + UTP = O-(5'-uridylyl)-L-seryl-[protein] + diphosphate. It catalyses the reaction L-tyrosyl-[protein] + UTP = O-(5'-uridylyl)-L-tyrosyl-[protein] + diphosphate. Functionally, nucleotidyltransferase involved in the post-translational modification of proteins. It can catalyze the addition of adenosine monophosphate (AMP) or uridine monophosphate (UMP) to a protein, resulting in modifications known as AMPylation and UMPylation. This Dechloromonas aromatica (strain RCB) protein is Protein nucleotidyltransferase YdiU.